A 144-amino-acid polypeptide reads, in one-letter code: Bradykinin-potentiating and C-type natriuretic peptides isoform 2 (144 aa).

Positions 1-23 (MVLSRLAASGLLLLALLALSVDG) are cleaved as a signal peptide. A propeptide spanning residues 24–30 (KPVQQWA) is cleaved from the precursor. Q31 bears the Pyrrolidone carboxylic acid mark. Positions 41-47 (LLVQQWA) are excised as a propeptide. Pyrrolidone carboxylic acid is present on Q48. The propeptide occupies 61-67 (LTVQQWA). Position 68 is a pyrrolidone carboxylic acid (Q68). The propeptide occupies 78-84 (LTVQQWA). Positions 81–110 (QQWAQGRPPGPPIPPLTVQQWAQARPPHPP) are disordered. At Q85 the chain carries Pyrrolidone carboxylic acid. Positions 96 to 102 (LTVQQWA) are excised as a propeptide. Q103 carries the pyrrolidone carboxylic acid modification. A propeptide spanning residues 114–116 (APL) is cleaved from the precursor. Q117 bears the Pyrrolidone carboxylic acid mark. V122 is a propeptide. Position 123 is a pyrrolidone carboxylic acid (Q123). Residues 128 to 144 (VQKWAPVQKWAPLLQPT) constitute a propeptide that is removed on maturation.

This sequence in the N-terminal section; belongs to the bradykinin-potentiating peptide family. As to expression, expressed by venom gland.

Its subcellular location is the secreted. It is found in the cytoplasm. The protein localises to the cytosol. Its function is as follows. Peptide with several activities. It inhibits the activity of the angiotensin-converting enzyme (ACE) by a preferential interaction with its C-domain. It evokes transient hypotension (-14 mmHg) similar to that evoked by 0.5 ug of bradykinin, when injected alone into rats. It has a high bradykinin-potentiating effect (120%), when 60 nmol of BPP-10c are coinjected with 0.5 ug of bradykinin into rats. Does not affect angiotensin-1 pressor effects. Shows potent and long-lasting antihypertensive activity as well as a reduction of the heart rate. It also binds and dose-dependently promotes the activation of cytosolic argininosuccinate synthase (ASS1), an enzyme that catalyzes the conversion of citrulline, L-aspartate and ATP to argininosuccinate, AMP and pyrophosphate. It also enhances ASS1-dependent arginine production in HEK 293 cells, as well as in spontaneous hypertensive rat (SHR) and Wistar rat plasma. In addition, it induces the production of nitric-oxide (NO) by HUVEC cells via the endothelial nitric-oxide synthase (NOS3), which use arginine as a substrate and produce NO. It has been shown to be internalized by ASS1-expressing endothelial (HUVEC) and kidney (HEK 293) cells, and is detected homogenously distributed within the cell cytoplasm for up to 2 hours. In terms of biological role, acts as indirect hypotensive agent. Increases leukocyte rolling flux and adhesion by five-fold in post-capillary venules, without any increments in vasodilation of arterioles. Acts as indirect hypotensive agent. Potently induces vasodilation of arterioles, with only a small increase in leukocyte rolling flux. The protein is Bradykinin-potentiating and C-type natriuretic peptides isoform 2 of Bothrops jararacussu (Jararacussu).